A 507-amino-acid polypeptide reads, in one-letter code: ATP synthase subunit alpha, chloroplastic (507 aa).

Position 170 to 177 (170 to 177 (GDRQTGKT)) interacts with ATP. A Phosphothreonine modification is found at threonine 257.

Belongs to the ATPase alpha/beta chains family. F-type ATPases have 2 components, CF(1) - the catalytic core - and CF(0) - the membrane proton channel. CF(1) has five subunits: alpha(3), beta(3), gamma(1), delta(1), epsilon(1). CF(0) has four main subunits: a, b, b' and c.

The protein resides in the plastid. It localises to the chloroplast thylakoid membrane. It carries out the reaction ATP + H2O + 4 H(+)(in) = ADP + phosphate + 5 H(+)(out). Functionally, produces ATP from ADP in the presence of a proton gradient across the membrane. The alpha chain is a regulatory subunit. This is ATP synthase subunit alpha, chloroplastic from Aethionema grandiflorum (Persian stone-cress).